A 130-amino-acid chain; its full sequence is Prefoldin subunit alpha (130 aa).

Belongs to the prefoldin subunit alpha family. Heterohexamer of two alpha and four beta subunits.

It is found in the cytoplasm. Molecular chaperone capable of stabilizing a range of proteins. Seems to fulfill an ATP-independent, HSP70-like function in archaeal de novo protein folding. The chain is Prefoldin subunit alpha from Thermoplasma volcanium (strain ATCC 51530 / DSM 4299 / JCM 9571 / NBRC 15438 / GSS1).